Here is a 610-residue protein sequence, read N- to C-terminus: Phosphomethylpyrimidine synthase (610 aa).

Substrate is bound by residues Asn-216, Met-245, Tyr-274, His-310, 330–332 (SRG), 371–374 (DGLR), and Glu-410. His-414 serves as a coordination point for Zn(2+). Position 437 (Tyr-437) interacts with substrate. Residue His-478 participates in Zn(2+) binding. [4Fe-4S] cluster is bound by residues Cys-558, Cys-561, and Cys-566.

It belongs to the ThiC family. In terms of assembly, homodimer. [4Fe-4S] cluster serves as cofactor.

It catalyses the reaction 5-amino-1-(5-phospho-beta-D-ribosyl)imidazole + S-adenosyl-L-methionine = 4-amino-2-methyl-5-(phosphooxymethyl)pyrimidine + CO + 5'-deoxyadenosine + formate + L-methionine + 3 H(+). It participates in cofactor biosynthesis; thiamine diphosphate biosynthesis. Its function is as follows. Catalyzes the synthesis of the hydroxymethylpyrimidine phosphate (HMP-P) moiety of thiamine from aminoimidazole ribotide (AIR) in a radical S-adenosyl-L-methionine (SAM)-dependent reaction. This chain is Phosphomethylpyrimidine synthase, found in Rhizobium etli (strain ATCC 51251 / DSM 11541 / JCM 21823 / NBRC 15573 / CFN 42).